The sequence spans 412 residues: Probable inactive allantoicase (412 aa).

It belongs to the allantoicase family.

Functionally, the function of this enzyme is unclear as allantoicase activity is not known to exist in mammals. The protein is Probable inactive allantoicase (ALLC) of Bos taurus (Bovine).